The sequence spans 322 residues: FAD-dependent monooxygenase subE (322 aa).

4 residues coordinate FAD: Glu35, Gly49, Arg108, and Asp313.

Belongs to the paxM FAD-dependent monooxygenase family. FAD is required as a cofactor.

It participates in secondary metabolite biosynthesis; terpenoid biosynthesis. In terms of biological role, FAD-dependent monooxygenase; part of the gene cluster that mediates the biosynthesis of the immunosuppressants subglutinols, meroterpenoids consisting of an alpha-pyrone (4-hydroxy-5,6-dimethyl-2-pyrone) moiety attached to a decalin core fused to a five-membered cyclic ether carrying a prenylside chain. The first step of the pathway is the synthesis of the alpha-pyrone moiety by the polyketide synthase subA via condensation of one acetyl-CoA starter unit with 3 malonyl-CoA units and 2 methylations. The alpha-pyrone is then combined with geranylgeranyl pyrophosphate (GGPP) formed by the GGPP synthase subD through the action of the prenyltransferase subC to yield a linear alpha-pyrone diterpenoid. Subsequent steps in the subglutinol biosynthetic pathway involve the decalin core formation, which is thought to be initiated by the epoxidation of the C10-C11 olefin by the FAD-dependent oxidoreductase subE. The following cyclization cascade would be catalyzed by the terpene cyclase subB. Lastly, the FAD-dependent dehydrogenase subF probably catalyzes the five-membered cyclic ether formation to complete the formation of subglutinol A. Subsequent redox reactions appear to give rise to subglutinol C and D, however, it remains unclear which enzymes are responsible for these transformations. SubD may have secondary function in the conversion of the identified subglutinols to subglutinol analog 45, which seems to be the major product of the cluster. In Metarhizium robertsii (strain ARSEF 23 / ATCC MYA-3075) (Metarhizium anisopliae (strain ARSEF 23)), this protein is FAD-dependent monooxygenase subE.